We begin with the raw amino-acid sequence, 341 residues long: Tetraacyldisaccharide 4'-kinase (341 aa).

Residue 54–61 (TVGGAGKT) coordinates ATP.

This sequence belongs to the LpxK family.

The catalysed reaction is a lipid A disaccharide + ATP = a lipid IVA + ADP + H(+). The protein operates within glycolipid biosynthesis; lipid IV(A) biosynthesis; lipid IV(A) from (3R)-3-hydroxytetradecanoyl-[acyl-carrier-protein] and UDP-N-acetyl-alpha-D-glucosamine: step 6/6. Transfers the gamma-phosphate of ATP to the 4'-position of a tetraacyldisaccharide 1-phosphate intermediate (termed DS-1-P) to form tetraacyldisaccharide 1,4'-bis-phosphate (lipid IVA). In Brucella melitensis biotype 2 (strain ATCC 23457), this protein is Tetraacyldisaccharide 4'-kinase.